Reading from the N-terminus, the 144-residue chain is Large ribosomal subunit protein uL15 (144 aa).

A disordered region spans residues 1 to 49 (MIKLECLQDPSPRKRRTKLLGRGPSSGHGKTSSRGHKGDCSRSGYKRRF).

The protein belongs to the universal ribosomal protein uL15 family. In terms of assembly, part of the 50S ribosomal subunit.

Functionally, binds to the 23S rRNA. This Chlamydia trachomatis serovar A (strain ATCC VR-571B / DSM 19440 / HAR-13) protein is Large ribosomal subunit protein uL15.